Here is a 208-residue protein sequence, read N- to C-terminus: Uracil phosphoribosyltransferase (208 aa).

5-phospho-alpha-D-ribose 1-diphosphate is bound by residues Arg78, Arg103, and 130-138 (DPMLATGGS). Uracil-binding positions include Ile193 and 198–200 (GDA). 5-phospho-alpha-D-ribose 1-diphosphate is bound at residue Asp199.

The protein belongs to the UPRTase family. It depends on Mg(2+) as a cofactor.

The catalysed reaction is UMP + diphosphate = 5-phospho-alpha-D-ribose 1-diphosphate + uracil. The protein operates within pyrimidine metabolism; UMP biosynthesis via salvage pathway; UMP from uracil: step 1/1. Allosterically activated by GTP. Functionally, catalyzes the conversion of uracil and 5-phospho-alpha-D-ribose 1-diphosphate (PRPP) to UMP and diphosphate. In Roseiflexus sp. (strain RS-1), this protein is Uracil phosphoribosyltransferase.